Consider the following 136-residue polypeptide: Small ribosomal subunit protein uS8c (136 aa).

The protein belongs to the universal ribosomal protein uS8 family. As to quaternary structure, part of the 30S ribosomal subunit.

The protein resides in the plastid. The protein localises to the chloroplast. Functionally, one of the primary rRNA binding proteins, it binds directly to 16S rRNA central domain where it helps coordinate assembly of the platform of the 30S subunit. This is Small ribosomal subunit protein uS8c (rps8) from Oryza sativa subsp. indica (Rice).